Here is a 230-residue protein sequence, read N- to C-terminus: Ribonuclease 3 (230 aa).

Residues 5-134 (EALLKSSFAI…FLGALLLDKG (130 aa)) form the RNase III domain. A Mg(2+)-binding site is contributed by Glu-47. Asp-51 is an active-site residue. Mg(2+)-binding residues include Asp-120 and Glu-123. Residue Glu-123 is part of the active site. The region spanning 160-229 (DYKTSLQEIL…AENALKALSE (70 aa)) is the DRBM domain.

It belongs to the ribonuclease III family. In terms of assembly, homodimer. It depends on Mg(2+) as a cofactor.

The protein resides in the cytoplasm. It catalyses the reaction Endonucleolytic cleavage to 5'-phosphomonoester.. Functionally, digests double-stranded RNA. Involved in the processing of primary rRNA transcript to yield the immediate precursors to the large and small rRNAs (23S and 16S). Processes some mRNAs, and tRNAs when they are encoded in the rRNA operon. Processes pre-crRNA and tracrRNA of type II CRISPR loci if present in the organism. In Streptococcus uberis (strain ATCC BAA-854 / 0140J), this protein is Ribonuclease 3.